We begin with the raw amino-acid sequence, 722 residues long: Nucleolar protein 10 (722 aa).

WD repeat units lie at residues 50–90 (EMPT…LKFE), 174–213 (TDAA…RVAA), 228–266 (EGLP…PLLV), 270–308 (YYGL…VFSS), and 310–349 (EPQA…PAPR). Coiled coils occupy residues 423–476 (EYRK…ANVA) and 511–534 (SNVA…EEQE). Disordered stretches follow at residues 521-555 (LLEE…GWVQ), 572-607 (SYIQ…PRFY), 616-635 (RSFS…LEER), and 664-722 (TEKQ…RRPF). Residues 523–534 (EEEQEQAEEEQE) show a composition bias toward acidic residues. A compositionally biased stretch (basic and acidic residues) spans 572–586 (SYIQRQERRQQDRNT). A compositionally biased stretch (polar residues) spans 587-600 (RLQSSDTHTQQSHG). Residues 620–681 (DVSRKQKTHK…QAERDHHEER (62 aa)) adopt a coiled-coil conformation. A compositionally biased stretch (basic and acidic residues) spans 664–682 (TEKQRFQQQAERDHHEERR). 2 stretches are compositionally biased toward basic residues: residues 683–693 (RIRRSAGHLHS) and 702–722 (GGGR…RRPF).

The protein belongs to the WD repeat NOL10/ENP2 family.

The protein localises to the nucleus. It is found in the nucleolus. This chain is Nucleolar protein 10 (nol10), found in Danio rerio (Zebrafish).